We begin with the raw amino-acid sequence, 62 residues long: UPF0434 protein SPO3421 (62 aa).

It belongs to the UPF0434 family.

The chain is UPF0434 protein SPO3421 from Ruegeria pomeroyi (strain ATCC 700808 / DSM 15171 / DSS-3) (Silicibacter pomeroyi).